The primary structure comprises 859 residues: Envelope glycoprotein (859 aa).

Residues 1–6 (MVSIAF) constitute a propeptide that is removed on maturation. Over 7–614 (YGGIPGGIST…KDLWSHIGNW (608 aa)) the chain is Extracellular. N-linked (GlcNAc...) asparagine; by host glycans are attached at residues N40, N112, N141, N148, N184, N201, N214, N233, N244, N282, N313, N340, N346, N368, N399, N406, N411, and N422. The segment at 446–466 (FGISAIVAAIVAATAIAASAT) is fusion peptide. Residues N483 and N490 are each glycosylated (N-linked (GlcNAc...) asparagine; by host). The segment at 498 to 513 (LIERQIKILYAMILQT) is immunosuppression. N550 and N557 each carry an N-linked (GlcNAc...) asparagine; by host glycan. Coiled-coil stretches lie at residues 576–624 (ILTI…SIIK) and 663–699 (KKFY…YCKQ). A helical membrane pass occupies residues 615 to 635 (IPGLGASIIKYIVMFLLIYLL). At 636 to 859 (LTSSPKILRA…TSHVSMPQYV (224 aa)) the chain is on the cytoplasmic side.

The mature envelope protein (Env) consists of a trimer of SU-TM heterodimers attached by noncovalent interactions or by a labile interchain disulfide bond. In terms of processing, specific enzymatic cleavages in vivo yield mature proteins. Envelope glycoproteins are synthesized as an inactive precursor that is N-glycosylated and processed likely by host cell furin or by a furin-like protease in the Golgi to yield the mature SU and TM proteins. The cleavage site between SU and TM requires the minimal sequence [KR]-X-[KR]-R.

It is found in the virion membrane. The protein localises to the host cell membrane. Its function is as follows. The surface protein (SU) attaches the virus to the host cell by binding to its receptor. This interaction triggers the refolding of the transmembrane protein (TM) and is thought to activate its fusogenic potential by unmasking its fusion peptide. Fusion occurs at the host cell plasma membrane. The transmembrane protein (TM) acts as a class I viral fusion protein. Under the current model, the protein has at least 3 conformational states: pre-fusion native state, pre-hairpin intermediate state, and post-fusion hairpin state. During viral and target cell membrane fusion, the coiled coil regions (heptad repeats) assume a trimer-of-hairpins structure, positioning the fusion peptide in close proximity to the C-terminal region of the ectodomain. The formation of this structure appears to drive apposition and subsequent fusion of viral and target cell membranes. Membranes fusion leads to delivery of the nucleocapsid into the cytoplasm. The sequence is that of Envelope glycoprotein (env) from Equus asinus (Donkey).